A 103-amino-acid chain; its full sequence is NADH-quinone oxidoreductase subunit K (103 aa).

The next 3 membrane-spanning stretches (helical) occupy residues 1–21 (MIVP…VGGV), 29–49 (ILLI…AFAG), and 62–82 (AVII…ALLV). The tract at residues 84-103 (GRRGGGTDRADSYDRLGEES) is disordered. A compositionally biased stretch (basic and acidic residues) spans 88–103 (GGTDRADSYDRLGEES).

The protein belongs to the complex I subunit 4L family. As to quaternary structure, NDH-1 is composed of 14 different subunits. Subunits NuoA, H, J, K, L, M, N constitute the membrane sector of the complex.

It localises to the cell inner membrane. The enzyme catalyses a quinone + NADH + 5 H(+)(in) = a quinol + NAD(+) + 4 H(+)(out). In terms of biological role, NDH-1 shuttles electrons from NADH, via FMN and iron-sulfur (Fe-S) centers, to quinones in the respiratory chain. The immediate electron acceptor for the enzyme in this species is believed to be ubiquinone. Couples the redox reaction to proton translocation (for every two electrons transferred, four hydrogen ions are translocated across the cytoplasmic membrane), and thus conserves the redox energy in a proton gradient. The chain is NADH-quinone oxidoreductase subunit K from Solidesulfovibrio magneticus (strain ATCC 700980 / DSM 13731 / RS-1) (Desulfovibrio magneticus).